The chain runs to 186 residues: MIEASKLKAGMTFETTDGKLIRVLEASHHKPGKGNTVMRMKLRDVRTGSTFDTTYRPEEKFEQAIIETRPAQYLYQMDDTAYFMDTENYEQYEIPIVNIENELKFILENSEVKIQFYGSEVIGVTIPTTVELVVTDTQPSIKGATVTGSGKPATLETGLVVNVPDFIEVGQKLVINTAEGTYVSRA.

This sequence belongs to the elongation factor P family.

It is found in the cytoplasm. It functions in the pathway protein biosynthesis; polypeptide chain elongation. Its function is as follows. Involved in peptide bond synthesis. Stimulates efficient translation and peptide-bond synthesis on native or reconstituted 70S ribosomes in vitro. Probably functions indirectly by altering the affinity of the ribosome for aminoacyl-tRNA, thus increasing their reactivity as acceptors for peptidyl transferase. This is Elongation factor P from Streptococcus mutans serotype c (strain ATCC 700610 / UA159).